A 98-amino-acid polypeptide reads, in one-letter code: uncharacterized protein (98 aa).

It belongs to the HesB/IscA family.

This is an uncharacterized protein from Staphylococcus aureus (strain MRSA252).